A 584-amino-acid chain; its full sequence is UBX domain-containing protein 2 (584 aa).

Topologically, residues 1–80 (MPVVNHEDSE…PTQTSTPMAE (80 aa)) are cytoplasmic. Residues 81–101 (TLVPPALGPRPLLFTASLPVV) form a helical membrane-spanning segment. At 102 to 151 (RPLPANFRNDFRTIGLNGRSNTVWSMFESFSYDGNPFLFILLLIPRIINR) the chain is on the lumenal side. A helical transmembrane segment spans residues 152–172 (LSATIFTFFCTLLSLHSISGG). Over 173–584 (GNSGKPKISK…DEEDEENEEQ (412 aa)) the chain is Cytoplasmic. A UBX domain is found at 426-570 (ETTGKQATLQ…WPNGSLLVEA (145 aa)).

Component of the DOA10 ubiquitin ligase complex which contains E3 ligase SSM4/DOA10 and CDC48-binding protein UBX2/SEL1. Component of the HRD1 ubiquitin ligase complex which contains the E3 ligase HRD1, its cofactors HRD3, USA1 and DER1, substrate recruiting factor YOS9 and UBX2. In ERAD-L, HRD3 and YOS9 jointly bind misfolded glycoproteins in the endoplasmic reticulum (ER) lumen. Movement of ERAD-L substrates through the ER membrane is facilitated by HRD1 and DER1 which have lateral gates facing each other and which distort the membrane region between the lateral gates, making it much thinner than a normal phospholipid bilayer. Substrates insert into the membrane as a hairpin loop with one strand interacting with DER1 and the other with HRD1. Both the DOA10 and HRD1 ubiquitin ligase complexes interact with the heterotrimeric CDC48-NPL4-UFD1 ATPase complex which is recruited by UBX2 via its interaction with CDC48 and which moves ubiquitinated substrates to the cytosol for targeting to the proteasome.

The protein localises to the endoplasmic reticulum membrane. Integral endoplasmic reticulum membrane protein that coordinates the assembly of the ER-associated protein degradation (ERAD) machinery at the ER membrane. Mediates binding of CDC48 to the E3 ubiquitin ligases SSM4/DOA10 and HRD1, and to ERAD substrates. Component of the DOA10 ubiquitin ligase complex, which is part of the ERAD-C pathway responsible for the rapid degradation of membrane proteins with misfolded cytoplasmic domains. ERAD-C substrates are ubiquitinated through DOA10 in conjunction with the E2 ubiquitin-conjugating enzymes UBC6 and UBC7-CUE1. Also a component of the HRD1 ubiquitin ligase complex, which is part of the ERAD-L and ERAD-M pathways responsible for the rapid degradation of soluble lumenal and membrane proteins with misfolded lumenal domains (ERAD-L), or ER-membrane proteins with misfolded transmembrane domains (ERAD-M). ERAD-L substrates are ubiquitinated through HRD1 in conjunction with the E2 ubiquitin-conjugating enzymes UBC1 and UBC7-CUE1. Ubiquitinated substrates are then removed to the cytosol via the action of the CDC48-NPL4-UFD1 ATPase complex and targeted to the proteasome. This is UBX domain-containing protein 2 (UBX2) from Saccharomyces cerevisiae (strain ATCC 204508 / S288c) (Baker's yeast).